The sequence spans 493 residues: MSQQHTLPVTLPAALSQKLLDTVPPPVNTQQEQRKQPAPLPPPCQKVPVELPVEVLSKHEEKHMTIVKGVPEQECEQQQPQEQELQQQHWEQDKEHQKAENPEQQLKQEKVQREKQQLQGQLEEEKKLLDQQLDQELAKRDEQLGTKKEQLLEFPEQQEGQLKHLEQEEGHLELPEQQEGQLKNLEHQEKPLELPEQQEGQLKHLEQQEKPLELPEQQEGQLKHLEQQEGQSELPEQQRGQPKYLEQEEGQLKHLEEQKGQLKHLEHEEGQLELPEQVGQPKHLEQLEKQLEHPEQQEGQLKHLEEEEGQVKHLGEQEEQLKHLEQQEEQLKHLEQQEGQLEHLEQQEGQLKHLEQHEGQLELPEQQVGQSKHLEQEEKQLEHPEQQEGQLKHLGKQKAQLELTEQVGQPKHLEQQEKQLEHPQQQEEQLKPQEQQEGQLKDLEQQERQLEQPVFASAPGQVQDIQQALPPKGEVLLPVEQQQQKQEVQGQHE.

Disordered regions lie at residues 1–47 (MSQQ…CQKV), 60–123 (EEKH…GQLE), and 139–493 (KRDE…GQHE). Over residues 76-89 (EQQQPQEQELQQQH) the composition is skewed to low complexity. Composition is skewed to basic and acidic residues over residues 90-116 (WEQDKEHQKAENPEQQLKQEKVQREKQ), 139-151 (KRDEQLGTKKEQL), 161-174 (QLKHLEQEEGHLEL), 184-193 (NLEHQEKPLE), and 201-213 (QLKHLEQQEKPLE). Over residues 228 to 240 (QEGQSELPEQQRG) the composition is skewed to polar residues. Composition is skewed to basic and acidic residues over residues 250 to 270 (GQLKHLEEQKGQLKHLEHEEG), 282 to 360 (KHLE…HEGQ), 372 to 386 (KHLEQEEKQLEHPEQ), 411 to 431 (KHLEQQEKQLEHPQQQEEQLK), and 439 to 450 (QLKDLEQQERQL). Over residues 473-493 (GEVLLPVEQQQQKQEVQGQHE) the composition is skewed to low complexity.

Belongs to the involucrin family. In terms of assembly, directly or indirectly cross-linked to cornifelin (CNFN). In terms of processing, substrate of transglutaminase. Specific glutamines or lysines are cross-linked to keratins, desmoplakin and to inter involucrin molecules. In terms of tissue distribution, keratinocytes of epidermis and other stratified squamous epithelia.

The protein localises to the cytoplasm. In terms of biological role, part of the insoluble cornified cell envelope (CE) of stratified squamous epithelia. This chain is Involucrin (IVL), found in Saguinus oedipus (Cotton-top tamarin).